A 378-amino-acid chain; its full sequence is Wnt inhibitory factor 1 (378 aa).

The N-terminal stretch at M1–Y28 is a signal peptide. The WIF domain maps to M36–C175. The N-linked (GlcNAc...) asparagine glycan is linked to N86. Cystine bridges form between C138–C175, C180–C190, C184–C196, C212–C222, C216–C228, and C230–C239. 5 consecutive EGF-like domains span residues Q176–V205, E208–E240, N243–E272, E272–S304, and K305–N336. Residue N243 is glycosylated (N-linked (GlcNAc...) asparagine). Cystine bridges form between C244–C254, C248–C260, C262–C271, C276–C286, C280–C292, C294–C303, C308–C318, C312–C324, and C326–C335. The interval V343–V378 is disordered. Residues E367–V378 are compositionally biased toward polar residues.

As to expression, highly expressed in unsegmented paraxial mesoderm.

Its subcellular location is the secreted. Functionally, binds to WNT proteins and inhibits their activities. May be involved in mesoderm segmentation. This is Wnt inhibitory factor 1 (wif1) from Danio rerio (Zebrafish).